A 247-amino-acid polypeptide reads, in one-letter code: Ribonuclease PH (247 aa).

Residues Arg-96 and 134–136 (GTR) contribute to the phosphate site.

The protein belongs to the RNase PH family. Homohexameric ring arranged as a trimer of dimers.

It carries out the reaction tRNA(n+1) + phosphate = tRNA(n) + a ribonucleoside 5'-diphosphate. Phosphorolytic 3'-5' exoribonuclease that plays an important role in tRNA 3'-end maturation. Removes nucleotide residues following the 3'-CCA terminus of tRNAs; can also add nucleotides to the ends of RNA molecules by using nucleoside diphosphates as substrates, but this may not be physiologically important. Probably plays a role in initiation of 16S rRNA degradation (leading to ribosome degradation) during starvation. This Tropheryma whipplei (strain TW08/27) (Whipple's bacillus) protein is Ribonuclease PH.